A 184-amino-acid polypeptide reads, in one-letter code: Latex serine proteinase inhibitor (184 aa).

Cysteines 45 and 89 form a disulfide. N-linked (GlcNAc...) asparagine glycosylation is found at asparagine 84 and asparagine 90. A disulfide bridge links cysteine 142 with cysteine 153.

Belongs to the protease inhibitor I3 (leguminous Kunitz-type inhibitor) family.

The protein resides in the secreted. It is found in the extracellular space. This chain is Latex serine proteinase inhibitor, found in Carica papaya (Papaya).